A 944-amino-acid polypeptide reads, in one-letter code: Valine--tRNA ligase (944 aa).

Residues 43–53 (PNVTGTLHMGH) carry the 'HIGH' region motif. The 'KMSKS' region signature appears at 550–554 (KMSKS). Residue K553 coordinates ATP. Residues 878-944 (LVDMDAERTR…TGLREQRAKL (67 aa)) adopt a coiled-coil conformation.

Belongs to the class-I aminoacyl-tRNA synthetase family. ValS type 1 subfamily. In terms of assembly, monomer.

Its subcellular location is the cytoplasm. The enzyme catalyses tRNA(Val) + L-valine + ATP = L-valyl-tRNA(Val) + AMP + diphosphate. Functionally, catalyzes the attachment of valine to tRNA(Val). As ValRS can inadvertently accommodate and process structurally similar amino acids such as threonine, to avoid such errors, it has a 'posttransfer' editing activity that hydrolyzes mischarged Thr-tRNA(Val) in a tRNA-dependent manner. This Xanthomonas campestris pv. campestris (strain B100) protein is Valine--tRNA ligase.